Consider the following 72-residue polypeptide: AGEECDCGSPANPCCDAATCKLRPGAQCADGLCCDQCRFIKKGTVCRPARGDWNDDTCTGQSADCPRNGLYG.

In terms of domain architecture, Disintegrin spans 1–72 (AGEECDCGSP…ADCPRNGLYG (72 aa)). Disulfide bonds link Cys5–Cys20, Cys7–Cys15, Cys14–Cys37, Cys28–Cys34, Cys33–Cys58, and Cys46–Cys65. The Cell attachment site motif lies at 50–52 (RGD).

The protein belongs to the venom metalloproteinase (M12B) family. P-II subfamily. P-IIa sub-subfamily. In terms of assembly, monomer. As to expression, expressed by the venom gland.

Its subcellular location is the secreted. Inhibits fibrinogen interaction with platelets. Acts by binding to the alpha-IIb/beta-3 (ITGA2B/ITGB3) on the platelet surface and inhibits aggregation induced by ADP, thrombin, platelet-activating factor and collagen. Functionally, inhibits ADP-induced platelet aggregation (IC(50) = 17.5nM), cancer cell migration in vitro, and experimental lung tumor colonization of cancer cells. The polypeptide is Disintegrin crotatroxin (Crotalus atrox (Western diamondback rattlesnake)).